A 540-amino-acid polypeptide reads, in one-letter code: ATP-dependent RNA helicase DBP5 (540 aa).

2 stretches are compositionally biased toward basic and acidic residues: residues 24 to 36 (KSGEKLEEIKKGS) and 50 to 119 (KEGD…EPKE). Residues 24 to 124 (KSGEKLEEIK…KEPKEPATNL (101 aa)) form a disordered region. The short motif at 150 to 178 (KSFEELGLSPELLKGLYAMKFNKPSKIQE) is the Q motif element. In terms of domain architecture, Helicase ATP-binding spans 183-350 (LLLSNPPRNM…ERLVPDANSL (168 aa)). 196–203 (SQSGTGKT) serves as a coordination point for ATP. The DEAD box motif lies at 297-300 (DEAD). The Helicase C-terminal domain maps to 361–538 (GIKQLYMDCR…EVEKIVKKVI (178 aa)).

The protein belongs to the DEAD box helicase family. DDX19/DBP5 subfamily. As to quaternary structure, associates with the nuclear pore complex.

The protein resides in the cytoplasm. It localises to the nucleus. Its subcellular location is the nuclear pore complex. It is found in the nucleus membrane. The enzyme catalyses ATP + H2O = ADP + phosphate + H(+). Its function is as follows. ATP-dependent RNA helicase associated with the nuclear pore complex and essential for mRNA export from the nucleus. May participate in a terminal step of mRNA export through the removal of proteins that accompany mRNA through the nucleopore complex. May also be involved in early transcription. In Candida albicans (strain SC5314 / ATCC MYA-2876) (Yeast), this protein is ATP-dependent RNA helicase DBP5 (DBP5).